The chain runs to 305 residues: UDP-3-O-acyl-N-acetylglucosamine deacetylase (305 aa).

Zn(2+) is bound by residues histidine 79, histidine 238, and aspartate 242. Histidine 265 functions as the Proton donor in the catalytic mechanism.

Belongs to the LpxC family. Requires Zn(2+) as cofactor.

It carries out the reaction a UDP-3-O-[(3R)-3-hydroxyacyl]-N-acetyl-alpha-D-glucosamine + H2O = a UDP-3-O-[(3R)-3-hydroxyacyl]-alpha-D-glucosamine + acetate. Its pathway is glycolipid biosynthesis; lipid IV(A) biosynthesis; lipid IV(A) from (3R)-3-hydroxytetradecanoyl-[acyl-carrier-protein] and UDP-N-acetyl-alpha-D-glucosamine: step 2/6. Catalyzes the hydrolysis of UDP-3-O-myristoyl-N-acetylglucosamine to form UDP-3-O-myristoylglucosamine and acetate, the committed step in lipid A biosynthesis. This is UDP-3-O-acyl-N-acetylglucosamine deacetylase from Haemophilus influenzae (strain 86-028NP).